Here is a 179-residue protein sequence, read N- to C-terminus: Large ribosomal subunit protein bL9 (179 aa).

The disordered stretch occupies residues 155 to 179; sequence KPEEAPVPVAEEPTAETEQAEVAAE. Acidic residues predominate over residues 167-179; sequence PTAETEQAEVAAE.

It belongs to the bacterial ribosomal protein bL9 family.

Binds to the 23S rRNA. This chain is Large ribosomal subunit protein bL9, found in Porphyromonas gingivalis (strain ATCC BAA-308 / W83).